We begin with the raw amino-acid sequence, 291 residues long: N-acetylmannosamine kinase (291 aa).

ATP is bound by residues 5–12 (AIDIGGTK) and 132–139 (GVGGGVVS). The Zn(2+) site is built by His156, Cys166, Cys168, and Cys173.

It belongs to the ROK (NagC/XylR) family. NanK subfamily. As to quaternary structure, homodimer.

The catalysed reaction is an N-acyl-D-mannosamine + ATP = an N-acyl-D-mannosamine 6-phosphate + ADP + H(+). Its pathway is amino-sugar metabolism; N-acetylneuraminate degradation; D-fructose 6-phosphate from N-acetylneuraminate: step 2/5. Its function is as follows. Catalyzes the phosphorylation of N-acetylmannosamine (ManNAc) to ManNAc-6-P. This is N-acetylmannosamine kinase from Escherichia coli O157:H7.